We begin with the raw amino-acid sequence, 112 residues long: Integration host factor subunit alpha (112 aa).

This sequence belongs to the bacterial histone-like protein family. In terms of assembly, heterodimer of an alpha and a beta chain.

Its function is as follows. This protein is one of the two subunits of integration host factor, a specific DNA-binding protein that functions in genetic recombination as well as in transcriptional and translational control. This Agrobacterium fabrum (strain C58 / ATCC 33970) (Agrobacterium tumefaciens (strain C58)) protein is Integration host factor subunit alpha.